A 239-amino-acid polypeptide reads, in one-letter code: Glucosamine-6-phosphate deaminase (239 aa).

Catalysis depends on Asp62, which acts as the Proton acceptor; for enolization step. Asn128 functions as the For ring-opening step in the catalytic mechanism. Catalysis depends on His130, which acts as the Proton acceptor; for ring-opening step. Glu135 acts as the For ring-opening step in catalysis.

It belongs to the glucosamine/galactosamine-6-phosphate isomerase family. NagB subfamily.

It catalyses the reaction alpha-D-glucosamine 6-phosphate + H2O = beta-D-fructose 6-phosphate + NH4(+). Its pathway is amino-sugar metabolism; N-acetylneuraminate degradation; D-fructose 6-phosphate from N-acetylneuraminate: step 5/5. Functionally, catalyzes the reversible isomerization-deamination of glucosamine 6-phosphate (GlcN6P) to form fructose 6-phosphate (Fru6P) and ammonium ion. The polypeptide is Glucosamine-6-phosphate deaminase (Lactobacillus johnsonii (strain CNCM I-12250 / La1 / NCC 533)).